Here is a 291-residue protein sequence, read N- to C-terminus: Dihydroorotate dehydrogenase A (fumarate) (291 aa).

FMN-binding positions include serine 18 and 42–43 (KS). Substrate-binding positions include lysine 42, 66–70 (NAVGL), and asparagine 126. Position 126 (asparagine 126) interacts with FMN. Cysteine 129 acts as the Nucleophile in catalysis. The FMN site is built by lysine 164 and isoleucine 190. Residue 191–192 (NT) coordinates substrate. FMN is bound by residues glycine 216, 242 to 243 (GG), and 264 to 265 (GS).

The protein belongs to the dihydroorotate dehydrogenase family. Type 1 subfamily. In terms of assembly, homodimer. It depends on FMN as a cofactor.

It localises to the cytoplasm. The catalysed reaction is (S)-dihydroorotate + fumarate = orotate + succinate. It functions in the pathway pyrimidine metabolism; UMP biosynthesis via de novo pathway. In terms of biological role, catalyzes the conversion of dihydroorotate to orotate with fumarate as the electron acceptor. In Lacticaseibacillus paracasei (strain ATCC 334 / BCRC 17002 / CCUG 31169 / CIP 107868 / KCTC 3260 / NRRL B-441) (Lactobacillus paracasei), this protein is Dihydroorotate dehydrogenase A (fumarate) (pyrD).